Consider the following 160-residue polypeptide: MIKKRKKKSYTSVYALGQYISMSAHKARRVIDQIRGRSYEEALMILELMPYRGCYPIFKLVYSAAANASHNKGFKETNLVISKAEVNQGNTVKKLKPRARGRSYPIKRSTCHITIVLEDISFYQQYEEYLMYLKKPGCRNENRNLTCYDTYSSGGLWDKK.

Belongs to the universal ribosomal protein uL22 family. In terms of assembly, part of the 50S ribosomal subunit.

The protein localises to the plastid. It is found in the chloroplast. Its function is as follows. This protein binds specifically to 23S rRNA. Functionally, the globular domain of the protein is located near the polypeptide exit tunnel on the outside of the subunit, while an extended beta-hairpin is found that lines the wall of the exit tunnel in the center of the 70S ribosome. This chain is Large ribosomal subunit protein uL22c (rpl22), found in Olimarabidopsis pumila (Dwarf rocket).